The following is a 115-amino-acid chain: MKSFKEQYTLDERLAESREIIAKYPTRIPVIAEKYCKTDLPAIEKKKFLVPRDMSVGQFIYILSARLHLSPGKALFVFVNNTLPQTAALMDSVYESYKDDDGFVYMCYSSEKTFG.

Residue glycine 115 is the site of Phosphatidylethanolamine amidated glycine attachment.

It belongs to the ATG8 family. In terms of assembly, interacts with ATG4. Interacts with NBR1. In terms of processing, gly-115 forms then a thioester bond with the 'Cys-558' of ATG7 (E1-like activating enzyme) before being transferred to the 'Cys-258' of ATG3 (the specific E2 conjugating enzyme), in order to be finally amidated with phosphatidylethanolamine. This lipid modification anchors ATG8 to autophagosomes. As to expression, constitutively expressed.

It localises to the cytoplasmic vesicle. The protein localises to the autophagosome membrane. It is found in the vacuole membrane. Its subcellular location is the cytoplasm. The protein resides in the cytoskeleton. Functionally, ubiquitin-like modifier involved in autophagosomes formation. May mediate the delivery of the autophagosomes to the vacuole via the microtubule cytoskeleton. In Arabidopsis thaliana (Mouse-ear cress), this protein is Autophagy-related protein 8i (ATG8I).